The chain runs to 212 residues: Fibroblast growth factor 8b (212 aa).

The N-terminal stretch at Met1–Gln27 is a signal peptide. Asn139 carries N-linked (GlcNAc...) asparagine glycosylation.

Belongs to the heparin-binding growth factors family.

The protein resides in the secreted. Functionally, may act as signaling molecule during development of the midbrain-hindbrain boundary (MHB) organizer, and be involved in patterning of the nervous system. This chain is Fibroblast growth factor 8b (fgf8b), found in Danio rerio (Zebrafish).